We begin with the raw amino-acid sequence, 40 residues long: Photosystem II reaction center protein J (40 aa).

Residues 8–28 form a helical membrane-spanning segment; it reads IPLWLIGTVAGIPVIGSVGVF.

It belongs to the PsbJ family. In terms of assembly, PSII is composed of 1 copy each of membrane proteins PsbA, PsbB, PsbC, PsbD, PsbE, PsbF, PsbH, PsbI, PsbJ, PsbK, PsbL, PsbM, PsbT, PsbX, PsbY, PsbZ, Psb30/Ycf12, at least 3 peripheral proteins of the oxygen-evolving complex and a large number of cofactors. It forms dimeric complexes.

The protein resides in the plastid. Its subcellular location is the chloroplast thylakoid membrane. Its function is as follows. One of the components of the core complex of photosystem II (PSII). PSII is a light-driven water:plastoquinone oxidoreductase that uses light energy to abstract electrons from H(2)O, generating O(2) and a proton gradient subsequently used for ATP formation. It consists of a core antenna complex that captures photons, and an electron transfer chain that converts photonic excitation into a charge separation. The chain is Photosystem II reaction center protein J from Acorus calamus (Sweet flag).